The sequence spans 334 residues: MLTDLFYSTFGCLYSPTSTMDVMGTARRKTVVRLNVYDMYWLNDYASNIGVGIFHSGIEVFGVEYAYGGHPYQFSGVFENSPQDAEELGETFKFKESIVVGETERSTSDIRKLIKSLGEDFRGDRYHLISRNCNHFSAVLARELTGKDIPGWINRLANLSGSIPFLEKCIPQEWLTPIVLQASVDEKKRGSVDSAEEATEKLVVRSLNDSRTTILDNRTANGAIIMSASSSNSDRICMSPSSSSSASSCDTLDYDDLIVQTPSTFSSEKKSRSNSPPIFRIWNTIKATINGTQQTAPTGAATVIPASSASNIGKTNSTPGTTSNGLAKPTCSEC.

Residues 30-174 enclose the PPPDE domain; the sequence is TVVRLNVYDM…FLEKCIPQEW (145 aa). Residues histidine 55 and cysteine 133 contribute to the active site. The segment covering 310–325 has biased composition (polar residues); the sequence is SNIGKTNSTPGTTSNG. Residues 310–334 form a disordered region; it reads SNIGKTNSTPGTTSNGLAKPTCSEC.

This sequence belongs to the DeSI family. As to expression, expressed in the pharynx, hypodermis, intestine, head neuron and tail neuron.

Its subcellular location is the cytoplasm. It is found in the nucleus. Protease which deconjugates SUMO from some substrate proteins. Has isopeptidase but not SUMO-processing activity. Collaborates with ubql-1 in the export of ubiquitinated proteins from the nucleus to the cytoplasm. This Caenorhabditis elegans protein is Desumoylating isopeptidase 1 homolog.